The primary structure comprises 83 residues: Small ribosomal subunit protein uS17 (83 aa).

It belongs to the universal ribosomal protein uS17 family. Part of the 30S ribosomal subunit.

In terms of biological role, one of the primary rRNA binding proteins, it binds specifically to the 5'-end of 16S ribosomal RNA. This is Small ribosomal subunit protein uS17 from Chlamydia trachomatis serovar L2 (strain ATCC VR-902B / DSM 19102 / 434/Bu).